A 77-amino-acid chain; its full sequence is Sec-independent protein translocase protein TatA (77 aa).

The chain crosses the membrane as a helical span at residues Met1–Gly21. Residues Met43–Ala77 form a disordered region. Residues Asp64–Ala77 are compositionally biased toward basic and acidic residues.

The protein belongs to the TatA/E family. As to quaternary structure, the Tat system comprises two distinct complexes: a TatABC complex, containing multiple copies of TatA, TatB and TatC subunits, and a separate TatA complex, containing only TatA subunits. Substrates initially bind to the TatABC complex, which probably triggers association of the separate TatA complex to form the active translocon.

It localises to the cell inner membrane. Functionally, part of the twin-arginine translocation (Tat) system that transports large folded proteins containing a characteristic twin-arginine motif in their signal peptide across membranes. TatA could form the protein-conducting channel of the Tat system. The sequence is that of Sec-independent protein translocase protein TatA from Burkholderia mallei (strain NCTC 10247).